Consider the following 942-residue polypeptide: Envelope glycoprotein (942 aa).

Positions Met-1 to Ala-80 are cleaved as a signal peptide. 23 N-linked (GlcNAc...) asparagine; by host glycosylation sites follow: Asn-51, Asn-98, Asn-131, Asn-176, Asn-228, Asn-331, Asn-348, Asn-354, Asn-370, Asn-379, Asn-400, Asn-404, Asn-435, Asn-441, Asn-447, Asn-457, Asn-467, Asn-481, Asn-493, Asn-503, Asn-509, Asn-527, and Asn-534. Over Glu-81–Gly-799 the chain is Extracellular. The fusion peptide stretch occupies residues Gly-631–Leu-651. Coiled coils occupy residues Lys-663–Leu-713 and Arg-754–Glu-789. Residues Leu-697 to Leu-713 are immunosuppression. The helical transmembrane segment at Trp-800–Ile-820 threads the bilayer. Residues Arg-821–Asp-942 are Cytoplasmic-facing.

The mature envelope protein (Env) consists of a trimer of SU-TM heterodimers attached by noncovalent interactions or by a labile interchain disulfide bond. In terms of processing, specific enzymatic cleavages in vivo yield mature proteins. Envelope glycoproteins are synthesized as an inactive precursor that is N-glycosylated and processed likely by host cell furin or by a furin-like protease in the Golgi to yield the mature SU and TM proteins. The cleavage site between SU and TM requires the minimal sequence [KR]-X-[KR]-R.

It is found in the virion membrane. Its subcellular location is the host cell membrane. Functionally, the surface protein (SU) attaches the virus to the host cell by binding to its receptor. This interaction triggers the refolding of the transmembrane protein (TM) and is thought to activate its fusogenic potential by unmasking its fusion peptide. Fusion occurs at the host cell plasma membrane. Its function is as follows. The transmembrane protein (TM) acts as a class I viral fusion protein. Under the current model, the protein has at least 3 conformational states: pre-fusion native state, pre-hairpin intermediate state, and post-fusion hairpin state. During viral and target cell membrane fusion, the coiled coil regions (heptad repeats) assume a trimer-of-hairpins structure, positioning the fusion peptide in close proximity to the C-terminal region of the ectodomain. The formation of this structure appears to drive apposition and subsequent fusion of viral and target cell membranes. Membranes fusion leads to delivery of the nucleocapsid into the cytoplasm. This chain is Envelope glycoprotein (env), found in Caprine arthritis encephalitis virus (strain 63) (CAEV-63).